We begin with the raw amino-acid sequence, 78 residues long: Putative antitoxin VapB4 (78 aa).

This sequence belongs to the UPF0330 family.

Functionally, possibly the antitoxin component of a type II toxin-antitoxin (TA) system. Its cognate toxin is VapC4 (Potential). In Pyrococcus furiosus (strain ATCC 43587 / DSM 3638 / JCM 8422 / Vc1), this protein is Putative antitoxin VapB4 (vapB4).